Here is a 415-residue protein sequence, read N- to C-terminus: Dynein assembly factor with WD repeat domains 1 (415 aa).

WD repeat units follow at residues 90-129 (AHIL…ELHT), 132-174 (GHKN…HTFR), 175-214 (GHTA…EVVT), 217-256 (GHLA…KVHT), 259-298 (GHCA…YVAT), 301-340 (GHDD…CVTK), 343-384 (GHEG…QVLE), and 386-415 (HTDE…RIWR).

Belongs to the WD repeat WDR69 family. As to quaternary structure, interacts with IFT46. As to expression, in early mouse embryos, expression is limited to distal, motile ciliated cells of the node.

Its subcellular location is the cytoplasm. The protein localises to the cytoskeleton. It localises to the flagellum basal body. It is found in the flagellum axoneme. In terms of biological role, required for axonemal dynein assembly and ciliary motility in ciliated organs, including Kupffer's vesicle, during embryogenesis. Facilitates the onset of robust cilia motility during development. The protein is Dynein assembly factor with WD repeat domains 1 of Mus musculus (Mouse).